The primary structure comprises 70 residues: Large ribosomal subunit protein uL29 (70 aa).

Belongs to the universal ribosomal protein uL29 family.

In Clostridium botulinum (strain Eklund 17B / Type B), this protein is Large ribosomal subunit protein uL29.